A 322-amino-acid polypeptide reads, in one-letter code: Cell division control protein 10 (322 aa).

Met-1 carries the post-translational modification N-acetylmethionine. The region spanning 29–302 (KGFQFNIMVV…EGFRARQLIA (274 aa)) is the Septin-type G domain. A G1 motif region spans residues 39-46 (GQSGLGKS). GTP is bound by residues 39–46 (GQSGLGKS), Thr-74, Gly-100, and 180–188 (KSDTLTLDE). The tract at residues 97–100 (DTPG) is G3 motif. The segment at 179–182 (GKSD) is G4 motif. A Phosphothreonine modification is found at Thr-216. The GTP site is built by Gly-236 and Arg-251.

Belongs to the TRAFAC class TrmE-Era-EngA-EngB-Septin-like GTPase superfamily. Septin GTPase family. Component of the septin complex which consists of CDC3, CDC10, CDC11, CDC12 and probably SHS1 and rearranges to a cortical collar of highly ordered filaments at the mother-bud-neck. A complex formed by CDC3, CDC10, CDC11 and CDC12 is capable of forming long filaments in vitro and the components seem to be present in a 2:2:2:2 arrangement in vivo. The filaments are proposed to be formed by the end-to-end polymerization of CDC3-CDC12-CDC11 complexes with CDC10 serving as a bridge to bundle the polymers into paired filaments. Component of the GIN4 complex composed of at least BNI5, CDC3, CDC10, CDC11, CDC12, GIN4, NAP1 and SHS1. Self-associates. Interacts with SYP1.

Its subcellular location is the membrane. It is found in the bud neck. Its function is as follows. Septins are GTPases involved in cytokinesis that assemble early in the cell cycle as a patch at the incipient bud site and form a ring approximate 15 minutes before bud emergence, which transforms into an hour-glass shaped collar of cortical filaments that spans both sides of the mother-bud neck. This collar persists until just before cytokinesis, when it splits into two rings that occupy opposite sides of the neck. The septins at the bud neck serve as a structural scaffold that recruits different components involved in diverse processes at specific stages during the cell cycle. Many proteins bind asymmetrically to the septin collar. The septin assembly is regulated by protein kinases GIN4 and/or CLA4. May act by recruiting MYO1 and HOF1, a protein involved in septation, to the site of cleavage. Septins are also involved in cell morphogenesis, bud site selection, chitin deposition, cell cycle regulation, cell compartmentalization and spore wall formation. This Saccharomyces cerevisiae (strain ATCC 204508 / S288c) (Baker's yeast) protein is Cell division control protein 10 (CDC10).